The sequence spans 90 residues: Probable Fe(2+)-trafficking protein (90 aa).

Belongs to the Fe(2+)-trafficking protein family.

Its function is as follows. Could be a mediator in iron transactions between iron acquisition and iron-requiring processes, such as synthesis and/or repair of Fe-S clusters in biosynthetic enzymes. This Vibrio vulnificus (strain CMCP6) protein is Probable Fe(2+)-trafficking protein.